Consider the following 1070-residue polypeptide: DNA-directed RNA polymerase subunit beta (1070 aa).

It belongs to the RNA polymerase beta chain family. In terms of assembly, in plastids the minimal PEP RNA polymerase catalytic core is composed of four subunits: alpha, beta, beta', and beta''. When a (nuclear-encoded) sigma factor is associated with the core the holoenzyme is formed, which can initiate transcription.

The protein localises to the plastid. It localises to the chloroplast. The enzyme catalyses RNA(n) + a ribonucleoside 5'-triphosphate = RNA(n+1) + diphosphate. Its function is as follows. DNA-dependent RNA polymerase catalyzes the transcription of DNA into RNA using the four ribonucleoside triphosphates as substrates. The protein is DNA-directed RNA polymerase subunit beta of Daucus carota (Wild carrot).